Reading from the N-terminus, the 94-residue chain is Protein RnfH (94 aa).

It belongs to the UPF0125 (RnfH) family.

The polypeptide is Protein RnfH (Serratia proteamaculans (strain 568)).